A 289-amino-acid polypeptide reads, in one-letter code: NFU1 iron-sulfur cluster scaffold homolog, mitochondrial (289 aa).

The N-terminal 56 residues, 1–56 (MAKLISYAKGGFLRNTRLTSRAVPQVYQHATSSRGFVHLTSSVAQSSAIHVSTPST), are a transit peptide targeting the mitochondrion. The interval 183–251 (IKELLDTRIR…IPEVESVEQV (69 aa)) is nifU. [4Fe-4S] cluster-binding residues include Cys-220 and Cys-223. Positions 267–289 (ERNLKQKDTSSTAPVGIGGGPAN) are disordered.

Belongs to the NifU family.

The protein localises to the mitochondrion. Molecular scaffold for [Fe-S] cluster assembly of mitochondrial iron-sulfur proteins. The protein is NFU1 iron-sulfur cluster scaffold homolog, mitochondrial of Drosophila willistoni (Fruit fly).